A 328-amino-acid chain; its full sequence is Ribosomal RNA large subunit methyltransferase F (328 aa).

The interval 1–38 is disordered; it reads MTDTPKPPRKKPQRPAKPAAPREKATLHPRNRHQGHYD.

This sequence belongs to the methyltransferase superfamily. METTL16/RlmF family.

It localises to the cytoplasm. The enzyme catalyses adenosine(1618) in 23S rRNA + S-adenosyl-L-methionine = N(6)-methyladenosine(1618) in 23S rRNA + S-adenosyl-L-homocysteine + H(+). Functionally, specifically methylates the adenine in position 1618 of 23S rRNA. In Pseudomonas syringae pv. tomato (strain ATCC BAA-871 / DC3000), this protein is Ribosomal RNA large subunit methyltransferase F.